Reading from the N-terminus, the 361-residue chain is Uroporphyrinogen decarboxylase (361 aa).

Substrate contacts are provided by residues 27-31 (RQAGR), aspartate 77, tyrosine 154, threonine 209, and histidine 327.

Belongs to the uroporphyrinogen decarboxylase family. In terms of assembly, homodimer.

The protein localises to the cytoplasm. The enzyme catalyses uroporphyrinogen III + 4 H(+) = coproporphyrinogen III + 4 CO2. The protein operates within porphyrin-containing compound metabolism; protoporphyrin-IX biosynthesis; coproporphyrinogen-III from 5-aminolevulinate: step 4/4. Its function is as follows. Catalyzes the decarboxylation of four acetate groups of uroporphyrinogen-III to yield coproporphyrinogen-III. In Coxiella burnetii (strain RSA 331 / Henzerling II), this protein is Uroporphyrinogen decarboxylase.